Consider the following 42-residue polypeptide: LPSDATPVLDVTGKELDPRLSYRIISIGRXALGGXVYLGKSP.

It belongs to the protease inhibitor I3 (leguminous Kunitz-type inhibitor) family. As to expression, cortex of potato tuber.

In terms of biological role, potent inhibitor of animal pancreatic trypsin (serine protease). The chain is Serine protease inhibitor 8 from Solanum tuberosum (Potato).